We begin with the raw amino-acid sequence, 246 residues long: Flagellar L-ring protein (246 aa).

Residues 1–20 (MMQKCLSPKTLIAALVVLSA) form the signal peptide. C21 is lipidated: N-palmitoyl cysteine. A lipid anchor (S-diacylglycerol cysteine) is attached at C21.

Belongs to the FlgH family. As to quaternary structure, the basal body constitutes a major portion of the flagellar organelle and consists of four rings (L,P,S, and M) mounted on a central rod.

Its subcellular location is the cell outer membrane. It localises to the bacterial flagellum basal body. Functionally, assembles around the rod to form the L-ring and probably protects the motor/basal body from shearing forces during rotation. The chain is Flagellar L-ring protein from Ruegeria pomeroyi (strain ATCC 700808 / DSM 15171 / DSS-3) (Silicibacter pomeroyi).